The sequence spans 240 residues: 2-C-methyl-D-erythritol 2,4-cyclodiphosphate synthase, apicoplast (240 aa).

Residues D71 and H73 each coordinate a divalent metal cation. 4-CDP-2-C-methyl-D-erythritol 2-phosphate is bound by residues 71–73 (DIH) and 115–116 (HS). H123 contacts a divalent metal cation. 4-CDP-2-C-methyl-D-erythritol 2-phosphate-binding positions include 137 to 139 (DIG), 142 to 146 (FPDKD), 181 to 187 (AQVPKIS), and 212 to 214 (GKT).

It belongs to the IspF family. As to quaternary structure, homotrimer. It depends on a divalent metal cation as a cofactor.

The protein resides in the plastid. Its subcellular location is the apicoplast. The catalysed reaction is 4-CDP-2-C-methyl-D-erythritol 2-phosphate = 2-C-methyl-D-erythritol 2,4-cyclic diphosphate + CMP. It functions in the pathway isoprenoid biosynthesis; isopentenyl diphosphate biosynthesis via DXP pathway; isopentenyl diphosphate from 1-deoxy-D-xylulose 5-phosphate: step 4/6. Its function is as follows. In the mevalonate-independent isoprenoid biosynthetic pathway, converts 4-diphosphocytidyl-2C-methyl-D-erythritol 2-phosphate into 2C-methyl-D-erythritol 2,4-cyclodiphosphate and CMP. The sequence is that of 2-C-methyl-D-erythritol 2,4-cyclodiphosphate synthase, apicoplast from Plasmodium falciparum (isolate 3D7).